The chain runs to 209 residues: ATP-dependent Clp protease proteolytic subunit (209 aa).

Residue S106 is the Nucleophile of the active site. H131 is a catalytic residue.

Belongs to the peptidase S14 family. In terms of assembly, fourteen ClpP subunits assemble into 2 heptameric rings which stack back to back to give a disk-like structure with a central cavity, resembling the structure of eukaryotic proteasomes.

It is found in the cytoplasm. The enzyme catalyses Hydrolysis of proteins to small peptides in the presence of ATP and magnesium. alpha-casein is the usual test substrate. In the absence of ATP, only oligopeptides shorter than five residues are hydrolyzed (such as succinyl-Leu-Tyr-|-NHMec, and Leu-Tyr-Leu-|-Tyr-Trp, in which cleavage of the -Tyr-|-Leu- and -Tyr-|-Trp bonds also occurs).. Functionally, cleaves peptides in various proteins in a process that requires ATP hydrolysis. Has a chymotrypsin-like activity. Plays a major role in the degradation of misfolded proteins. In Brucella suis biovar 1 (strain 1330), this protein is ATP-dependent Clp protease proteolytic subunit.